The following is a 116-amino-acid chain: Holo-[acyl-carrier-protein] synthase (116 aa).

Aspartate 8 and glutamate 59 together coordinate Mg(2+).

It belongs to the P-Pant transferase superfamily. AcpS family. The cofactor is Mg(2+).

The protein localises to the cytoplasm. The catalysed reaction is apo-[ACP] + CoA = holo-[ACP] + adenosine 3',5'-bisphosphate + H(+). Transfers the 4'-phosphopantetheine moiety from coenzyme A to a Ser of acyl-carrier-protein. The sequence is that of Holo-[acyl-carrier-protein] synthase from Staphylococcus saprophyticus subsp. saprophyticus (strain ATCC 15305 / DSM 20229 / NCIMB 8711 / NCTC 7292 / S-41).